Consider the following 345-residue polypeptide: MDAISKTERRKQSLSVVLSTYGPGLLVTAAVAMAAQFLSEHYGAPAMLMALLLGIAFHFLAEEGRCVAGIELSAKLVLRIGVALLGMRISVDLLIGLGGGTILLLVSAIVATILFGLVAARLLGRGWRLALLTSGAVAICGASAAMAIAAVLPRNEFSERNLIFTVLSVTVLSTLAMIGYPIVAEYLGLDGQATGIFFGGTIHDVAQVVGAGFSVSPEAGETATLVKLIRVTMLAPVVLIFSLVLRSVPQEGASIGKRAPLVPGFVLAFLVLAGFNSAGLVPVLASEVGMAISRWALLAGIVAVGMKTSLRRVLEVGGDAVALVVAETLFIAVFILAGMYYLGHS.

The next 10 membrane-spanning stretches (helical) occupy residues 13–32 (SLSV…AAVA), 42–61 (YGAP…HFLA), 93–115 (LLIG…TILF), 130–152 (ALLT…AAVL), 161–183 (NLIF…YPIV), 193–215 (ATGI…GFSV), 228–247 (LIRV…VLRS), 262–284 (VPGF…VPVL), 291–310 (AISR…KTSL), and 320–342 (AVAL…MYYL).

This sequence belongs to the UPF0324 family.

It is found in the cell membrane. This chain is UPF0324 membrane protein RB0971, found in Rhizobium meliloti (strain 1021) (Ensifer meliloti).